The chain runs to 2883 residues: Bifunctional DNA-directed RNA polymerase subunit beta-beta' (2883 aa).

The tract at residues 1-1377 is DNA-directed RNA polymerase subunit beta; the sequence is MPTTLKSGNR…DVTVYGETEE (1377 aa). The tract at residues 1382–2883 is DNA-directed RNA polymerase subunit beta'; it reads PMPIKEDDRP…IRIKEKTEGA (1502 aa). The Zn(2+) site is built by cysteine 1447, cysteine 1449, cysteine 1462, and cysteine 1465. The Mg(2+) site is built by aspartate 1846, aspartate 1848, and aspartate 1850. 4 residues coordinate Zn(2+): cysteine 2176, cysteine 2250, cysteine 2257, and cysteine 2260.

In the N-terminal section; belongs to the RNA polymerase beta chain family. This sequence in the C-terminal section; belongs to the RNA polymerase beta' chain family. In terms of assembly, the RNAP catalytic core consists of 2 alpha, 1 beta/beta' and 1 omega subunit. When a sigma factor is associated with the core the holoenzyme is formed, which can initiate transcription. The cofactor is Mg(2+). Requires Zn(2+) as cofactor.

The catalysed reaction is RNA(n) + a ribonucleoside 5'-triphosphate = RNA(n+1) + diphosphate. In terms of biological role, DNA-dependent RNA polymerase catalyzes the transcription of DNA into RNA using the four ribonucleoside triphosphates as substrates. This Wolinella succinogenes (strain ATCC 29543 / DSM 1740 / CCUG 13145 / JCM 31913 / LMG 7466 / NCTC 11488 / FDC 602W) (Vibrio succinogenes) protein is Bifunctional DNA-directed RNA polymerase subunit beta-beta' (rpoBC).